Reading from the N-terminus, the 305-residue chain is MWNLRITPLSFGAACQGIFTSTLLLSSLTVPLVCTIVYDSCLYMDINASRALANVYDLPDDFFPKIDDLVRDAKDALEPYWKSDSIKKHVLIATHFVDLIEDFWQTTQGMHEIAESLRAVIPPTTAPVPTGYLIQHEEAEEIPLGDLFKHQEERIVSFQPDYPITARIHAHLKAYAKINEESLDRARRLLWWHYNCLLWGEANVTNYISRLRTWLSTPEKYRGRDAPTIEAITRPIQVAQGGRKTSSGTRKPRGLEPRRRKVKTTVVYGRRRSKSRERRAPSPQRAGSPLPRSSSSHHRSPSPRK.

The first 19 residues, 1 to 19 (MWNLRITPLSFGAACQGIF), serve as a signal peptide directing secretion. A disordered region spans residues 226–305 (APTIEAITRP…SHHRSPSPRK (80 aa)). 2 stretches are compositionally biased toward basic residues: residues 258–277 (RRRK…KSRE) and 295–305 (SSHHRSPSPRK). Residues 273 to 305 (SKSRERRAPSPQRAGSPLPRSSSSHHRSPSPRK) constitute a propeptide that is removed on maturation.

This sequence belongs to the avihepadnavirus precore antigen family. In terms of assembly, homodimerizes.

The protein localises to the secreted. May regulate immune response to the intracellular capsid in acting as a T-cell tolerogen, by having an immunoregulatory effect which prevents destruction of infected cells by cytotoxic T-cells. This chain is External core antigen (C), found in Duck hepatitis B virus (strain China) (DHBV).